A 541-amino-acid polypeptide reads, in one-letter code: Testis-specific chromodomain protein Y 2 (541 aa).

The 61-residue stretch at 6–66 (FEVEAIVDKR…RQTEKQKKLT (61 aa)) folds into the Chromo domain. The segment at 72–104 (RIFSNNARRRTSRSTKANYSKNSPKTPVTDKHH) is disordered. Residues 87–97 (KANYSKNSPKT) show a composition bias toward polar residues.

In terms of tissue distribution, testis specific.

Its subcellular location is the nucleus. It catalyses the reaction L-lysyl-[protein] + acetyl-CoA = N(6)-acetyl-L-lysyl-[protein] + CoA + H(+). In terms of biological role, may have histone acetyltransferase activity. This Homo sapiens (Human) protein is Testis-specific chromodomain protein Y 2 (CDY2A).